An 88-amino-acid polypeptide reads, in one-letter code: Small ribosomal subunit protein uS17 (88 aa).

Belongs to the universal ribosomal protein uS17 family. In terms of assembly, part of the 30S ribosomal subunit.

Its function is as follows. One of the primary rRNA binding proteins, it binds specifically to the 5'-end of 16S ribosomal RNA. The protein is Small ribosomal subunit protein uS17 of Ligilactobacillus salivarius (strain UCC118) (Lactobacillus salivarius).